The primary structure comprises 187 residues: Small ribosomal subunit protein uS5 (187 aa).

One can recognise an S5 DRBM domain in the interval 21–84; that stretch reads MVDKLVHINR…ESAKRDMIFV (64 aa).

Belongs to the universal ribosomal protein uS5 family. As to quaternary structure, part of the 30S ribosomal subunit. Contacts proteins S4 and S8.

With S4 and S12 plays an important role in translational accuracy. Functionally, located at the back of the 30S subunit body where it stabilizes the conformation of the head with respect to the body. The chain is Small ribosomal subunit protein uS5 from Mesorhizobium japonicum (strain LMG 29417 / CECT 9101 / MAFF 303099) (Mesorhizobium loti (strain MAFF 303099)).